We begin with the raw amino-acid sequence, 473 residues long: O-methyltransferase ARMGADRAFT_1088206 (473 aa).

S-adenosyl-L-methionine contacts are provided by residues 276–277 (AG), D299, 330–331 (DM), and R348. H352 functions as the Proton acceptor in the catalytic mechanism.

The protein belongs to the class I-like SAM-binding methyltransferase superfamily. Cation-independent O-methyltransferase family.

Its pathway is secondary metabolite biosynthesis. In terms of biological role, O-methyltransferase, part of the gene cluster that mediates the biosynthesis of melleolides, a range of antifungal and phytotoxic polyketide derivatives composed of an orsellinic acid (OA) moiety esterified to various sesquiterpene alcohols. The first step in melleolides biosynthesis is performed by the delta(6)-protoilludene synthase PRO1 which catalyzes the cyclization of farnesyl diphosphate to protoilludene. The orsellinic acid synthase armB produces OA by condensing acetyl-CoA with 3 malonyl-CoA units in a three-round chain elongation reaction folowed by a C2-C7 ring closure. ArmB further catalyzes the trans-esterification of OA to the various sesquiterpene alcohols resulting from the hydroxylation of protoilludene. The melleolides cluster also includes 5 cytochrome P450 monooxygenases, 4 NAD(+)-dependent oxidoreductases, one flavin-dependent oxidoreductase, and one O-methyltransferase. The cytochrome P450 monooxygenases may be involved in protoilludene hydroxylation to elaborate melleolides with multiple alcohol groups, such as melleolide D, which carries alcohol functionalities at C-4, C-5, C-10, and C-13. The role of the NAD(+)-dependent enzymes remains unknown. Numerous melleolides, including arnamial, show 5'-O-methylation of the aromatic moiety which may be catalyzed by the methyltransferase encoded in the cluster. The flavin-dependent oxidoreductase might represent the dehydrogenase yielding the aldehyde in position 1 of arnamial and other melleolides. Finally, several halogenase localized outside of the cluster, are able to catalyze the transfer of a single chlorine atom to the melleolide backbone, resulting in a 6'-chloromelleolide product. In Armillaria gallica (Bulbous honey fungus), this protein is O-methyltransferase ARMGADRAFT_1088206.